The primary structure comprises 151 residues: Ribonuclease H (151 aa).

Positions 1-143 (MYKKIEIFTD…CDQLARLAAK (143 aa)) constitute an RNase H type-1 domain. Mg(2+)-binding residues include D10, E48, D70, and D135.

Belongs to the RNase H family. In terms of assembly, monomer. Mg(2+) serves as cofactor.

The protein localises to the cytoplasm. It catalyses the reaction Endonucleolytic cleavage to 5'-phosphomonoester.. In terms of biological role, endonuclease that specifically degrades the RNA of RNA-DNA hybrids. The protein is Ribonuclease H of Blochmanniella pennsylvanica (strain BPEN).